The chain runs to 1291 residues: Ethylene-insensitive protein 2.2 (1291 aa).

A run of 6 helical transmembrane segments spans residues 18–38 (ALPA…PGKW), 48–68 (FGFD…LCQY), 96–116 (FLGV…ILGI), 128–148 (LSTC…FATL), 155–175 (SFLS…GVLI), and 195–215 (SAFA…FFLH). A glycan (N-linked (GlcNAc...) asparagine) is linked at Asn227. 7 consecutive transmembrane segments (helical) span residues 231–251 (GALC…IYLV), 253–273 (YVLM…LLTF), 288–308 (VALC…ALTW), 335–355 (IIAV…GIYQ), 356–376 (LLIF…IPLF), 393–413 (FLEF…IIFV), and 441–461 (VLLI…ATPL). Residues 498–518 (TEEESIGGQEQLSGPGKSAES) form a disordered region. Residue Asn550 is glycosylated (N-linked (GlcNAc...) asparagine). The segment at 614–662 (AEKEDDEGDSWEPEESSKGVPGSTSSLTSDGPGSFRSLSGKSDEGGNGA) is disordered. The span at 617 to 627 (EDDEGDSWEPE) shows a compositional bias: acidic residues. Polar residues predominate over residues 635-653 (GSTSSLTSDGPGSFRSLSG). Phosphoserine occurs at positions 647 and 664. 2 disordered regions span residues 742 to 768 (QIHS…GGQR) and 787 to 808 (GPSR…TLPS). Residues 759–768 (NIDSSYGGQR) show a composition bias toward polar residues. Thr818 bears the Phosphothreonine mark. The segment at 836-856 (GSSSLNGQMDSPAPISPSLGP) is disordered. Asn891 carries N-linked (GlcNAc...) asparagine glycosylation. A Phosphoserine modification is found at Ser923. The N-linked (GlcNAc...) asparagine glycan is linked to Asn1027. Residues 1210-1229 (HRSSPPVSNGMLPPASKPGR) form a disordered region. A Nuclear localization signal motif is present at residues 1262–1269 (DVAFPKGK).

It belongs to the NRAMP (TC 2.A.55) family.

The protein localises to the endoplasmic reticulum membrane. Its subcellular location is the nucleus. It is found in the cytoplasm. Central factor in signaling pathways regulated by ethylene (ET) and involved in various processes including development, plant defense, senescence, nucleotide sugar flux, and tropisms. Functionally, trafficking signal inducing ethylene response. The nuclear localization is both necessary and sufficient to activate EIN3-mediated transcription and ethylene responses. The protein is Ethylene-insensitive protein 2.2 of Populus trichocarpa (Western balsam poplar).